The sequence spans 464 residues: ATP synthase subunit beta (464 aa).

Residue Gly-153 to Thr-160 coordinates ATP.

It belongs to the ATPase alpha/beta chains family. In terms of assembly, F-type ATPases have 2 components, CF(1) - the catalytic core - and CF(0) - the membrane proton channel. CF(1) has five subunits: alpha(3), beta(3), gamma(1), delta(1), epsilon(1). CF(0) has three main subunits: a(1), b(2) and c(9-12). The alpha and beta chains form an alternating ring which encloses part of the gamma chain. CF(1) is attached to CF(0) by a central stalk formed by the gamma and epsilon chains, while a peripheral stalk is formed by the delta and b chains.

It is found in the cell inner membrane. The enzyme catalyses ATP + H2O + 4 H(+)(in) = ADP + phosphate + 5 H(+)(out). Produces ATP from ADP in the presence of a proton gradient across the membrane. The catalytic sites are hosted primarily by the beta subunits. This is ATP synthase subunit beta from Burkholderia vietnamiensis (strain G4 / LMG 22486) (Burkholderia cepacia (strain R1808)).